The following is a 65-amino-acid chain: Large ribosomal subunit protein eL24 (65 aa).

Cys6, Cys9, Cys32, and Cys36 together coordinate Zn(2+). The C4-type zinc-finger motif lies at Cys6 to Cys36.

The protein belongs to the eukaryotic ribosomal protein eL24 family. In terms of assembly, part of the 50S ribosomal subunit. Forms a cluster with proteins L3 and L14. Requires Zn(2+) as cofactor.

Binds to the 23S rRNA. This chain is Large ribosomal subunit protein eL24, found in Pyrobaculum arsenaticum (strain DSM 13514 / JCM 11321 / PZ6).